A 504-amino-acid polypeptide reads, in one-letter code: Plasma protease C1 inhibitor (504 aa).

The first 22 residues, 1–22 (MASKLTPLTLLLLLLAGDRAFS), serve as a signal peptide directing secretion. Positions 23-75 (DSEVTSHSSQDPLVVQEGSRDSVPERDGSRSPIEHTGQSSTWPTTSGSTKISN) are disordered. Residues 24–33 (SEVTSHSSQD) show a composition bias toward polar residues. A compositionally biased stretch (basic and acidic residues) spans 40–55 (GSRDSVPERDGSRSPI). Residues 58 to 75 (TGQSSTWPTTSGSTKISN) are compositionally biased toward polar residues. 5 N-linked (GlcNAc...) asparagine glycosylation sites follow: Asn-75, Asn-83, Asn-107, Asn-243, and Asn-356. The segment at 94 to 132 (AQLPEDSPSQSPVNSSSPPSTASAPPTQAPTEPLCPEPL) is disordered. Residues 100–125 (SPSQSPVNSSSPPSTASAPPTQAPTE) show a composition bias toward low complexity.

This sequence belongs to the serpin family. As to quaternary structure, interacts with MASP1.

The protein resides in the secreted. Functionally, serine protease inhibitor, which acrs as a regulator of the classical complement pathway. Forms a proteolytically inactive stoichiometric complex with the C1r or C1s proteases. May also regulate blood coagulation, fibrinolysis and the generation of kinins. Very efficient inhibitor of FXIIa. Inhibits chymotrypsin and kallikrein. In Rattus norvegicus (Rat), this protein is Plasma protease C1 inhibitor (Serping1).